The primary structure comprises 110 residues: Iron-sulfur cluster assembly protein CyaY (110 aa).

This sequence belongs to the frataxin family.

Its function is as follows. Involved in iron-sulfur (Fe-S) cluster assembly. May act as a regulator of Fe-S biogenesis. The polypeptide is Iron-sulfur cluster assembly protein CyaY (Paracidovorax citrulli (strain AAC00-1) (Acidovorax citrulli)).